The primary structure comprises 124 residues: Large ribosomal subunit protein uL22c (124 aa).

This sequence belongs to the universal ribosomal protein uL22 family. In terms of assembly, part of the 50S ribosomal subunit.

Its subcellular location is the plastid. It is found in the chloroplast. Its function is as follows. This protein binds specifically to 23S rRNA. The globular domain of the protein is located near the polypeptide exit tunnel on the outside of the subunit, while an extended beta-hairpin is found that lines the wall of the exit tunnel in the center of the 70S ribosome. The sequence is that of Large ribosomal subunit protein uL22c (rpl22) from Amborella trichopoda.